Here is a 108-residue protein sequence, read N- to C-terminus: UPF0235 protein RB8260 (108 aa).

Belongs to the UPF0235 family.

This chain is UPF0235 protein RB8260, found in Rhodopirellula baltica (strain DSM 10527 / NCIMB 13988 / SH1).